The following is a 276-amino-acid chain: MDPCSVGVQLRTTHDCHKTFYTRHTGFKTLKELSSNDMLLLQLRTGMTLSGNNTICLHHVKIYIDRFEDLQKSCCDPFNIHKKLAKKNLHVIDLDDATFLSAKFGRQLVPGWKLCPKCTQIINGSVDVDSDDRQRRKPDSDGRTAKALRSLQFTNPGKQTEFAPEGGKREKRKLTKATSAASDRQIIPAKSKVYDSQGLLIFSGMDLCDCLDEDCLGCFYACPTCGSTKCGAECRCDRKWLYEQIEIEGGEIIHNKHAGKAYGLLSPCHPYDILQK.

The segment at Lys-158–Ala-177 is disordered. Lys-176 is covalently cross-linked (Glycyl lysine isopeptide (Lys-Gly) (interchain with G-Cter in SUMO2)). Residues Ser-182 and Ser-266 each carry the phosphoserine modification.

As to quaternary structure, interacts with ARL14 and MYO1E.

The protein resides in the cytoplasm. In terms of biological role, through its interaction with ARL14 and MYO1E, may connect MHC class II-containing cytoplasmic vesicles to the actin network and hence controls the movement of these vesicles along the actin cytoskeleton in dendritic cells. The chain is ARL14 effector protein (Arl14ep) from Mus musculus (Mouse).